Consider the following 529-residue polypeptide: MERLAGRVMLAGGMSRAVMAIAAGAVGALALPPFGFFAALFFSFTLLVWLVDGCTGKPGGGLFSRILPAFGIGWCFGFGYFVAGLWWLGNALLLEADEFAWALPLAILGLPALLALFYGFAVAAANLLWSDGLGRIAALAAAFGVSEWLRSFLATGFPWNAIGYGIMPIPIMMQSAHLLGLLSITTLAVFIFASPALIGTKKGMGPGLALAGLLLAAHFGYGFYRLQTPAETPADALTVRIVQPAIDQSRKMLNTDRAEIFAEHLRLSALPPGEGKKRPDIIVWPETSVPFILTQNPDALAEIASTLEDGQVLFTGAVRMEDQGAGRPPRYYNSVYAIDSQGEIIGATDKVHLTPFGEYVPFEGILREFGIDNVIALPGGFSAASSRTPLTLPSGKTFYPLICYEIIFPGEMTPGLQGAAAILNVTNDGWFGDTPGPYQHFLQARVRAVETGVPVIRGANTGISAVIDPYGRIIAGLDYGRVGILDATLSGGSNDAFTYDTHRTYFWLIFSILMIVAVFPALSFARRQN.

5 helical membrane-spanning segments follow: residues 8 to 28, 66 to 86, 105 to 125, 178 to 198, and 203 to 223; these read VMLA…AVGA, ILPA…AGLW, LAIL…VAAA, LLGL…PALI, and GMGP…GYGF. One can recognise a CN hydrolase domain in the interval 242 to 491; sequence VQPAIDQSRK…VGILDATLSG (250 aa). The active-site Proton acceptor is the E286. The active site involves K350. Residue C403 is the Nucleophile of the active site. Residues 505–525 form a helical membrane-spanning segment; the sequence is YFWLIFSILMIVAVFPALSFA.

This sequence belongs to the CN hydrolase family. Apolipoprotein N-acyltransferase subfamily.

The protein resides in the cell inner membrane. The enzyme catalyses N-terminal S-1,2-diacyl-sn-glyceryl-L-cysteinyl-[lipoprotein] + a glycerophospholipid = N-acyl-S-1,2-diacyl-sn-glyceryl-L-cysteinyl-[lipoprotein] + a 2-acyl-sn-glycero-3-phospholipid + H(+). Its pathway is protein modification; lipoprotein biosynthesis (N-acyl transfer). In terms of biological role, catalyzes the phospholipid dependent N-acylation of the N-terminal cysteine of apolipoprotein, the last step in lipoprotein maturation. This Agrobacterium fabrum (strain C58 / ATCC 33970) (Agrobacterium tumefaciens (strain C58)) protein is Apolipoprotein N-acyltransferase.